We begin with the raw amino-acid sequence, 43 residues long: Protein PsbN (43 aa).

Residues 7–27 traverse the membrane as a helical segment; sequence LSIAIGSILLVITGFAIYTAF.

The protein belongs to the PsbN family.

It localises to the cellular thylakoid membrane. In terms of biological role, may play a role in photosystem I and II biogenesis. The chain is Protein PsbN from Crocosphaera subtropica (strain ATCC 51142 / BH68) (Cyanothece sp. (strain ATCC 51142)).